Consider the following 535-residue polypeptide: T-complex protein 1 subunit zeta 1 (535 aa).

The protein belongs to the TCP-1 chaperonin family. As to quaternary structure, heterooligomeric complex of about 850 to 900 kDa that forms two stacked rings, 12 to 16 nm in diameter.

Its subcellular location is the cytoplasm. Molecular chaperone; assists the folding of proteins upon ATP hydrolysis. Known to play a role, in vitro, in the folding of actin and tubulin. This Arabidopsis thaliana (Mouse-ear cress) protein is T-complex protein 1 subunit zeta 1.